A 241-amino-acid chain; its full sequence is MEAAADGPAETQSPVQKDSPAKTQSPAQDTSIMSRNNADTGRVLALPEHKKKRKGNLPAESVKILRDWMYKHRFKAYPSEEEKQMLSEKTNLSLLQISNWFINARRRILPDMLQQHRNDPIIGHKTGKDAHATHLQSTEASVPAKSGPSGPDNVQSLPLWPLPKGQMSREKQPDPESAPSQKLTGIAQPKKKVKVSITSPSSPELVSPEEYADFSSFLLLVDAAVQRAAELELEKKQEPNP.

Disordered stretches follow at residues 1 to 58 (MEAA…GNLP) and 125 to 207 (KTGK…ELVS). Residues 10-39 (ETQSPVQKDSPAKTQSPAQDTSIMSRNNAD) show a composition bias toward polar residues. The homeobox; TALE-type DNA-binding region spans 48–111 (EHKKKRKGNL…INARRRILPD (64 aa)).

The protein belongs to the TALE/TGIF homeobox family.

The protein resides in the nucleus. May have a transcription role in testis. This is Homeobox protein TGIF2LX (TGIF2LX) from Pan troglodytes (Chimpanzee).